Consider the following 89-residue polypeptide: uncharacterized protein (89 aa).

Residues 39–61 (FVCFWSIWFWTGDISFSLLSMLV) traverse the membrane as a helical segment.

Its subcellular location is the membrane. This is an uncharacterized protein from Saccharomyces cerevisiae (strain ATCC 204508 / S288c) (Baker's yeast).